Reading from the N-terminus, the 638-residue chain is MHLTPHWIPLVASLGLLAGGSFASAAEEAFDLWNECAKACVLDLKDGVRSSRMSVDPAIADTNGQGVLHYSMVLEGGNDALKLAIDNALSITSDGLTIRLEGGVEPNKPVRYSYTRQARGSWSLNWLVPIGHEKPSNIKVFIHELNAGNQLSHMSPIYTIEMGDELLAKLARDATFFVRAHESNEMQPTLAISHAGVSVVMAQAQPRREKRWSEWASGKVLCLLDPLDGVYNYLAQQRCNLDDTWEGKIYRVLAGNPAKHDLDIKPTVISHRLHFPEGGSLAALTAHQACHLPLETFTRHRQPRGWEQLEQCGYPVQRLVALYLAARLSWNQVDQVIRNALASPGSGGDLGEAIREQPEQARLALTLAAAESERFVRQGTGNDEAGAASADVVSLTCPVAAGECAGPADSGDALLERNYPTGAEFLGDGGDISFSTRGTQNWTVERLLQAHRQLEERGYVFVGYHGTFLEAAQSIVFGGVRARSQDLDAIWRGFYIAGDPALAYGYAQDQEPDARGRIRNGALLRVYVPRSSLPGFYRTGLTLAAPEAAGEVERLIGHPLPLRLDAITGPEEEGGRLETILGWPLAERTVVIPSAIPTDPRNVGGDLDPSSIPDKEQAISALPDYASQPGKPPREDLK.

Positions 1–25 are cleaved as a signal peptide; that stretch reads MHLTPHWIPLVASLGLLAGGSFASA. Residues 26–277 are domain Ia (required for target cell recognition); the sequence is AEEAFDLWNE…VISHRLHFPE (252 aa). Residues 278-389 form an II (required for translocation in target cell cytoplasm) region; the sequence is GGSLAALTAH…TGNDEAGAAS (112 aa). A disulfide bond links C290 and C312. The tract at residues 390–429 is domain Ib; sequence ADVVSLTCPVAAGECAGPADSGDALLERNYPTGAEFLGDG. Positions 430-638 are III (required for ADP-ribosyl activity); that stretch reads GDISFSTRGT…PGKPPREDLK (209 aa). Residues 465 to 467, S474, 479 to 485, and E578 contribute to the NAD(+) site; these read HGT and GVRARSQ. E578 is an active-site residue. Positions 596 to 638 are disordered; sequence IPTDPRNVGGDLDPSSIPDKEQAISALPDYASQPGKPPREDLK.

The 8 cysteines participate in intrachain disulfide bonds.

It carries out the reaction diphthamide-[translation elongation factor 2] + NAD(+) = N-(ADP-D-ribosyl)diphthamide-[translation elongation factor 2] + nicotinamide + H(+). Its activity is regulated as follows. Inhibited by 1,8-naphthalimide (NAP) as well as a number of poly(ADP-ribose) polymerase inhibitors and other compounds. In terms of biological role, an NAD-dependent ADP-ribosyltransferase (ADPRT). Catalyzes the transfer of the ADP ribosyl moiety of oxidized NAD (NAD(+)) onto eukaryotic elongation factor 2 (eEF-2) thus arresting protein synthesis. Has an LD(50) of 65 ng/ml against the human lung epithelial cell line C38. The protein is Exotoxin A of Pseudomonas aeruginosa (strain ATCC 15692 / DSM 22644 / CIP 104116 / JCM 14847 / LMG 12228 / 1C / PRS 101 / PAO1).